The chain runs to 227 residues: Uracil-DNA glycosylase (227 aa).

Catalysis depends on Asp68, which acts as the Proton acceptor.

Belongs to the uracil-DNA glycosylase (UDG) superfamily. UNG family.

It localises to the cytoplasm. It carries out the reaction Hydrolyzes single-stranded DNA or mismatched double-stranded DNA and polynucleotides, releasing free uracil.. In terms of biological role, excises uracil residues from the DNA which can arise as a result of misincorporation of dUMP residues by DNA polymerase or due to deamination of cytosine. The sequence is that of Uracil-DNA glycosylase from Mycobacterium sp. (strain JLS).